The following is a 550-amino-acid chain: Sorting nexin-33 (550 aa).

In terms of domain architecture, SH3 spans 1-61; it reads MALKARALYS…PASYVEIQSS (61 aa). The tract at residues 62-152 is disordered; sequence RSGSVQVDYS…QDSIASGKRG (91 aa). Over residues 86-102 the composition is skewed to acidic residues; that stretch reads YDDDDEEDDDDWDDWDD. Positions 128–144 are enriched in basic and acidic residues; sequence SRPEYSHRPRPALERQD. The PX domain maps to 206 to 316; it reads FNCSVEEPTK…HFLGCQDEKQ (111 aa). A BAR domain is found at 347 to 550; the sequence is LQDVEERVDV…EKTLHLYDEL (204 aa).

Belongs to the sorting nexin family.

Its subcellular location is the cytoplasm. It is found in the cytosol. It localises to the membrane. The protein localises to the cytoplasmic vesicle membrane. Plays a role in the reorganization of the cytoskeleton, endocytosis and cellular vesicle trafficking, both during interphase and at the end of mitotic cell divisions. Required for efficient progress through mitosis and cytokinesis. Required for normal formation of the cleavage furrow at the end of mitosis. Modulates endocytosis of cell-surface proteins. Promotes membrane tubulation (in vitro). May promote the formation of macropinosomes. The polypeptide is Sorting nexin-33 (snx33) (Xenopus laevis (African clawed frog)).